The following is a 453-amino-acid chain: Bifunctional protein GlmU (453 aa).

Residues 1 to 225 are pyrophosphorylase; the sequence is MNIVILAAGT…EWETLGVNSK (225 aa). UDP-N-acetyl-alpha-D-glucosamine contacts are provided by residues 6–9, lysine 20, glutamine 71, 76–77, 98–100, glycine 135, glutamate 150, asparagine 165, and asparagine 223; these read LAAG, GT, and YGD. Residue aspartate 100 participates in Mg(2+) binding. Position 223 (asparagine 223) interacts with Mg(2+). The interval 226–246 is linker; that stretch reads AQLAELERIHQRNVADALLVD. An N-acetyltransferase region spans residues 247–453; the sequence is GVTLADPARV…GYVRPVKKKS (207 aa). 2 residues coordinate UDP-N-acetyl-alpha-D-glucosamine: arginine 329 and lysine 347. Histidine 359 functions as the Proton acceptor in the catalytic mechanism. 2 residues coordinate UDP-N-acetyl-alpha-D-glucosamine: tyrosine 362 and asparagine 373. Acetyl-CoA-binding positions include alanine 376, 382-383, serine 401, and alanine 419; that span reads NY.

It in the N-terminal section; belongs to the N-acetylglucosamine-1-phosphate uridyltransferase family. The protein in the C-terminal section; belongs to the transferase hexapeptide repeat family. As to quaternary structure, homotrimer. Requires Mg(2+) as cofactor.

It is found in the cytoplasm. The enzyme catalyses alpha-D-glucosamine 1-phosphate + acetyl-CoA = N-acetyl-alpha-D-glucosamine 1-phosphate + CoA + H(+). It carries out the reaction N-acetyl-alpha-D-glucosamine 1-phosphate + UTP + H(+) = UDP-N-acetyl-alpha-D-glucosamine + diphosphate. It participates in nucleotide-sugar biosynthesis; UDP-N-acetyl-alpha-D-glucosamine biosynthesis; N-acetyl-alpha-D-glucosamine 1-phosphate from alpha-D-glucosamine 6-phosphate (route II): step 2/2. Its pathway is nucleotide-sugar biosynthesis; UDP-N-acetyl-alpha-D-glucosamine biosynthesis; UDP-N-acetyl-alpha-D-glucosamine from N-acetyl-alpha-D-glucosamine 1-phosphate: step 1/1. The protein operates within bacterial outer membrane biogenesis; LPS lipid A biosynthesis. In terms of biological role, catalyzes the last two sequential reactions in the de novo biosynthetic pathway for UDP-N-acetylglucosamine (UDP-GlcNAc). The C-terminal domain catalyzes the transfer of acetyl group from acetyl coenzyme A to glucosamine-1-phosphate (GlcN-1-P) to produce N-acetylglucosamine-1-phosphate (GlcNAc-1-P), which is converted into UDP-GlcNAc by the transfer of uridine 5-monophosphate (from uridine 5-triphosphate), a reaction catalyzed by the N-terminal domain. The polypeptide is Bifunctional protein GlmU (Burkholderia orbicola (strain MC0-3)).